The following is a 385-amino-acid chain: Probable dual-specificity RNA methyltransferase RlmN (385 aa).

A disordered region spans residues 1–35 (MNVKEPAEEAAIQLRTERQRIEPEGEEQSEQPTDL). The active-site Proton acceptor is the Glu-121. Residues 132 to 367 (TRDRVTVCLS…AVIREERGQD (236 aa)) form the Radical SAM core domain. Cys-139 and Cys-372 are disulfide-bonded. [4Fe-4S] cluster contacts are provided by Cys-146, Cys-150, and Cys-153. Residues 198 to 199 (GE), Ser-230, 253 to 255 (SLH), and Asn-329 each bind S-adenosyl-L-methionine. The active-site S-methylcysteine intermediate is the Cys-372.

Belongs to the radical SAM superfamily. RlmN family. [4Fe-4S] cluster serves as cofactor.

The protein resides in the cytoplasm. It catalyses the reaction adenosine(2503) in 23S rRNA + 2 reduced [2Fe-2S]-[ferredoxin] + 2 S-adenosyl-L-methionine = 2-methyladenosine(2503) in 23S rRNA + 5'-deoxyadenosine + L-methionine + 2 oxidized [2Fe-2S]-[ferredoxin] + S-adenosyl-L-homocysteine. The enzyme catalyses adenosine(37) in tRNA + 2 reduced [2Fe-2S]-[ferredoxin] + 2 S-adenosyl-L-methionine = 2-methyladenosine(37) in tRNA + 5'-deoxyadenosine + L-methionine + 2 oxidized [2Fe-2S]-[ferredoxin] + S-adenosyl-L-homocysteine. Specifically methylates position 2 of adenine 2503 in 23S rRNA and position 2 of adenine 37 in tRNAs. This is Probable dual-specificity RNA methyltransferase RlmN from Heliobacterium modesticaldum (strain ATCC 51547 / Ice1).